The primary structure comprises 307 residues: Ribosomal RNA small subunit methyltransferase H (307 aa).

S-adenosyl-L-methionine-binding positions include 32–34, aspartate 52, phenylalanine 78, aspartate 99, and glutamine 106; that span reads GGH.

This sequence belongs to the methyltransferase superfamily. RsmH family.

The protein localises to the cytoplasm. The enzyme catalyses cytidine(1402) in 16S rRNA + S-adenosyl-L-methionine = N(4)-methylcytidine(1402) in 16S rRNA + S-adenosyl-L-homocysteine + H(+). Specifically methylates the N4 position of cytidine in position 1402 (C1402) of 16S rRNA. This chain is Ribosomal RNA small subunit methyltransferase H, found in Acinetobacter baumannii (strain AB0057).